A 529-amino-acid polypeptide reads, in one-letter code: Pheophorbide a oxygenase, chloroplastic (529 aa).

Disordered stretches follow at residues 1–24 (MPVMAPTASLLLSPRPLPASRRVP) and 46–72 (LRVAAPPSVPGEADQAPGETEPSTSSA). The N-terminal 47 residues, 1–47 (MPVMAPTASLLLSPRPLPASRRVPSLPALSASGRLRLRRARADTRLR), are a transit peptide targeting the chloroplast. The region spanning 82-194 (WYPVSLVEDL…TLVSQGLLFV (113 aa)) is the Rieske domain. The [2Fe-2S] cluster site is built by Cys-124, His-126, Cys-144, and His-147.

It depends on [2Fe-2S] cluster as a cofactor. In terms of tissue distribution, expressed in leaves. Expressed at low levels in roots, stems, panicles and seeds.

It is found in the plastid. The protein localises to the chloroplast. The enzyme catalyses pheophorbide a + 2 reduced [2Fe-2S]-[ferredoxin] + O2 + 2 H(+) = red chlorophyll catabolite + 2 oxidized [2Fe-2S]-[ferredoxin]. The protein operates within porphyrin-containing compound metabolism; chlorophyll degradation. Its function is as follows. Catalyzes the key reaction of chlorophyll catabolism, porphyrin macrocycle cleavage of pheophorbide a (pheide a) to a primary fluorescent catabolite (pFCC). Works in a two-step reaction with red chlorophyll catabolite reductase (RCCR). Creates the intermediate RCC through the opening of the porphyrin macrocycle by the introduction of one atom of molecular oxygen at the alpha-methine bridge. Seems to be specific for pheide a. Belongs to the chlorophyll catabolic enzymes (CCEs). May play a role in senescence and response to wounding. The protein is Pheophorbide a oxygenase, chloroplastic of Oryza sativa subsp. japonica (Rice).